Consider the following 644-residue polypeptide: MISRYSRRPVSHNLEIRGLSRSCLDQHPLPEEADNGTAHSSRLLHNLQEDMSLYSRSEESSASSVRSGCQTLTTDDTVPSWSGIHSYTGTGISTERSSVFSWGYDEFDKAASRQVQQMFEEIDELLYERKCETQLKGLQDECQEWAFRFPHLRILGTQVVCPTDEGFQWYATPAQTPSPSSSFQSKENTVSELYVQGRRAVLCRPTVEVTNPSIRTSGNNEDELPSVIEAEGLIEEYLAYDCRDMDEECEREYVSRRRRRRRCLPPVSPYRCRQEAVLDMLFDDVWRELIGWIEELVRKHWDGYVLDDEKSTVALSPKCPDPQNPFMLPSNVSTVLPPLSQTRTQQLTTNLQAQTSRVPVGPAVAHHNLNDLIMIHGIPLQQRNLGTLDRLNQSDCRDSEDKVSHRPGSSVIPAGKPRPRRALDQSTSSLTRPPQSARRRNPPPRNLMPITSSVTQPITTMEEVVRGTRLTTPSDRLTSPPMHLSRNTLLPPIGTGDIDHVYSGQHTRLIQKQRGSSSRAHSAVTDEGISLQPRDKLHLLDVFSRPNTTHTFRSDTPYHRSFTGIDNIGQGRPGRASVGVDSLGIGVTGISLGISSSSFIDSFSHRPMGHFPIGHEEEPDAKASGQARSHNRGGSTARSSRPGL.

Disordered regions lie at residues 392–490 (NQSD…NTLL), 551–575 (TFRS…RPGR), and 609–644 (GHFP…RPGL). The span at 395 to 404 (DCRDSEDKVS) shows a compositional bias: basic and acidic residues. Over residues 449-459 (PITSSVTQPIT) the composition is skewed to polar residues. Polar residues predominate over residues 626–644 (QARSHNRGGSTARSSRPGL).

Belongs to the FAM149 family.

This chain is Protein FAM149B1 (fam149b1), found in Danio rerio (Zebrafish).